Here is a 104-residue protein sequence, read N- to C-terminus: Large ribosomal subunit protein uL23 (104 aa).

It belongs to the universal ribosomal protein uL23 family. As to quaternary structure, part of the 50S ribosomal subunit. Contacts protein L29, and trigger factor when it is bound to the ribosome.

Its function is as follows. One of the early assembly proteins it binds 23S rRNA. One of the proteins that surrounds the polypeptide exit tunnel on the outside of the ribosome. Forms the main docking site for trigger factor binding to the ribosome. The chain is Large ribosomal subunit protein uL23 from Ralstonia pickettii (strain 12J).